The sequence spans 98 residues: NADH-ubiquinone oxidoreductase chain 4L (98 aa).

3 consecutive transmembrane segments (helical) span residues 2-22, 29-49, and 61-81; these read PSIS…MLIF, SLLC…LTIL, and ILLL…LVTV.

Belongs to the complex I subunit 4L family. In terms of assembly, core subunit of respiratory chain NADH dehydrogenase (Complex I) which is composed of 45 different subunits.

It is found in the mitochondrion inner membrane. The enzyme catalyses a ubiquinone + NADH + 5 H(+)(in) = a ubiquinol + NAD(+) + 4 H(+)(out). Core subunit of the mitochondrial membrane respiratory chain NADH dehydrogenase (Complex I) which catalyzes electron transfer from NADH through the respiratory chain, using ubiquinone as an electron acceptor. Part of the enzyme membrane arm which is embedded in the lipid bilayer and involved in proton translocation. This Lemur catta (Ring-tailed lemur) protein is NADH-ubiquinone oxidoreductase chain 4L (MT-ND4L).